We begin with the raw amino-acid sequence, 391 residues long: 23S rRNA (uracil(747)-C(5))-methyltransferase RlmC (391 aa).

[4Fe-4S] cluster-binding residues include C5, C13, C16, and C95. The S-adenosyl-L-methionine site is built by Q220, F249, E276, and N322. Residue C349 is the Nucleophile of the active site.

This sequence belongs to the class I-like SAM-binding methyltransferase superfamily. RNA M5U methyltransferase family. RlmC subfamily.

It carries out the reaction uridine(747) in 23S rRNA + S-adenosyl-L-methionine = 5-methyluridine(747) in 23S rRNA + S-adenosyl-L-homocysteine + H(+). In terms of biological role, catalyzes the formation of 5-methyl-uridine at position 747 (m5U747) in 23S rRNA. This Actinobacillus pleuropneumoniae serotype 3 (strain JL03) protein is 23S rRNA (uracil(747)-C(5))-methyltransferase RlmC.